The primary structure comprises 288 residues: ATP synthase gamma chain (288 aa).

This sequence belongs to the ATPase gamma chain family. As to quaternary structure, F-type ATPases have 2 components, CF(1) - the catalytic core - and CF(0) - the membrane proton channel. CF(1) has five subunits: alpha(3), beta(3), gamma(1), delta(1), epsilon(1). CF(0) has three main subunits: a, b and c.

The protein localises to the cell membrane. Produces ATP from ADP in the presence of a proton gradient across the membrane. The gamma chain is believed to be important in regulating ATPase activity and the flow of protons through the CF(0) complex. The chain is ATP synthase gamma chain from Bacillus pumilus (strain SAFR-032).